The following is a 146-amino-acid chain: Snaclec coagulation factor IX/factor X-binding protein subunit B (146 aa).

A signal peptide spans 1–23 (MGRFIFLSFGLLVVFLSLSGTGA). Cystine bridges form between Cys-25–Cys-36, Cys-53–Cys-142, and Cys-119–Cys-134. Residues 32 to 143 (YEGHCYKPFN…CRMEAYFVCE (112 aa)) form the C-type lectin domain. Ca(2+) is bound by residues Ser-64 and Glu-70. Glu-143 provides a ligand contact to Ca(2+).

This sequence belongs to the snaclec family. As to quaternary structure, heterodimer with subunit A of IX/X-bp or IX-bp; disulfide-linked. In terms of tissue distribution, expressed by the venom gland.

It is found in the secreted. When linked to subunit A of IX/X-bp, anticoagulant protein which binds to the gamma-carboxyglutamic acid-domain regions of factors IX (F9) and factor X (F10) in the presence of calcium with a 1 to 1 stoichiometry. In terms of biological role, when linked to subunit A of IX-bp, anticoagulant protein which binds to the gamma-carboxyglutamic acid-domain regions of factor IX (but not to factor X) in the presence of calcium with a 1 to 1 stoichiometry. The protein is Snaclec coagulation factor IX/factor X-binding protein subunit B of Gloydius halys (Chinese water mocassin).